Consider the following 483-residue polypeptide: Glutamyl-tRNA(Gln) amidotransferase subunit A (483 aa).

Active-site charge relay system residues include K75 and S150. Catalysis depends on S174, which acts as the Acyl-ester intermediate.

Belongs to the amidase family. GatA subfamily. Heterotrimer of A, B and C subunits.

The catalysed reaction is L-glutamyl-tRNA(Gln) + L-glutamine + ATP + H2O = L-glutaminyl-tRNA(Gln) + L-glutamate + ADP + phosphate + H(+). Functionally, allows the formation of correctly charged Gln-tRNA(Gln) through the transamidation of misacylated Glu-tRNA(Gln) in organisms which lack glutaminyl-tRNA synthetase. The reaction takes place in the presence of glutamine and ATP through an activated gamma-phospho-Glu-tRNA(Gln). This chain is Glutamyl-tRNA(Gln) amidotransferase subunit A, found in Legionella pneumophila (strain Corby).